Reading from the N-terminus, the 385-residue chain is Effector protein hopAB3 (385 aa).

3 disordered regions span residues 1–61 (MVGI…AGRP), 73–139 (TREW…SPLY), and 215–293 (ADSQ…PRIN). The segment at 1 to 333 (MVGISGRAGP…INMEDLRAAL (333 aa)) is host recognition. Over residues 217-234 (SQQAARAPARTPPRSSVR) the composition is skewed to low complexity. Composition is skewed to polar residues over residues 245 to 256 (ATESSSGSNQRS) and 265 to 283 (MTSN…TSQR).

Belongs to the HopAB family. Interacts physically with plant cell Pto.

It is found in the secreted. Its function is as follows. Effector protein involved in gene-for-gene resistance in tomato plants. It is recognized by the host Pto resistance protein and elicits Pto and Prf-dependent hypersensitive response (HR) and programmed cell death (PCD), resulting in host immunity. In susceptible plants, promotes virulence, in part, by enhancing the development of disease symptoms and bacterial growth. The sequence is that of Effector protein hopAB3 (hopAB3) from Pseudomonas syringae pv. maculicola.